The primary structure comprises 191 residues: MKLDVFAGQEKSELSMIEVARAILEERGRDNEMYFSDLVNEIQNYLGKSDAGIRHALPFFYTDLNTDGSFIPLGENKWGLRSWYAIDEIDEEIITLEEDEDGAQKRKKKRVNAFMDGDEDAIDYRDDDPEDEDFTEESAEVEYDEDDPDDEKSEVESYDSELNEIIPEDDFEEVDINEEDEEDEEDEEPVL.

The 70-residue stretch at 14–83 folds into the HTH HARE-type domain; it reads LSMIEVARAI…GENKWGLRSW (70 aa). The segment at 118-191 is disordered; that stretch reads DEDAIDYRDD…EDEEDEEPVL (74 aa).

The protein belongs to the RpoE family. RNAP is composed of a core of 2 alpha, a beta and a beta' subunits. The core is associated with a delta subunit and one of several sigma factors.

Functionally, participates in both the initiation and recycling phases of transcription. In the presence of the delta subunit, RNAP displays an increased specificity of transcription, a decreased affinity for nucleic acids, and an increased efficiency of RNA synthesis because of enhanced recycling. This is Probable DNA-directed RNA polymerase subunit delta from Streptococcus pyogenes serotype M18 (strain MGAS8232).